The following is a 373-amino-acid chain: Probable pectin lyase C (373 aa).

The N-terminal stretch at Met-1–Ala-18 is a signal peptide. 2 disulfide bridges follow: Cys-81–Cys-100 and Cys-90–Cys-220. The N-linked (GlcNAc...) asparagine glycan is linked to Asn-123. The active site involves Arg-250. Cys-316 and Cys-324 form a disulfide bridge.

It belongs to the polysaccharide lyase 1 family.

Its subcellular location is the secreted. The catalysed reaction is Eliminative cleavage of (1-&gt;4)-alpha-D-galacturonan methyl ester to give oligosaccharides with 4-deoxy-6-O-methyl-alpha-D-galact-4-enuronosyl groups at their non-reducing ends.. Functionally, pectinolytic enzymes consist of four classes of enzymes: pectin lyase, polygalacturonase, pectin methylesterase and rhamnogalacturonase. Among pectinolytic enzymes, pectin lyase is the most important in depolymerization of pectin, since it cleaves internal glycosidic bonds of highly methylated pectins. This is Probable pectin lyase C (pelC) from Aspergillus niger (strain ATCC MYA-4892 / CBS 513.88 / FGSC A1513).